The primary structure comprises 511 residues: Trigger factor (511 aa).

The PPIase FKBP-type domain occupies 168 to 253 (GDLLTIDFVG…VKEVKAPAEV (86 aa)). A disordered region spans residues 446 to 511 (DEHEHHHHDH…KAPAKKKKED (66 aa)). Residues 455-478 (HDHDHDHDHDHDHGHDHDHGDEKP) show a composition bias toward basic and acidic residues. Positions 479–488 (KKKPAAKKAA) are enriched in basic residues. Basic and acidic residues predominate over residues 489–498 (AKSDDGEAKP). Over residues 499–511 (AAKKAPAKKKKED) the composition is skewed to basic residues.

This sequence belongs to the FKBP-type PPIase family. Tig subfamily.

It localises to the cytoplasm. The catalysed reaction is [protein]-peptidylproline (omega=180) = [protein]-peptidylproline (omega=0). Involved in protein export. Acts as a chaperone by maintaining the newly synthesized protein in an open conformation. Functions as a peptidyl-prolyl cis-trans isomerase. In Parvibaculum lavamentivorans (strain DS-1 / DSM 13023 / NCIMB 13966), this protein is Trigger factor.